Consider the following 338-residue polypeptide: tRNA N6-adenosine threonylcarbamoyltransferase (338 aa).

Fe cation-binding residues include histidine 110 and histidine 114. Residues 132–136 (LLSGG), aspartate 165, glycine 178, and asparagine 274 contribute to the substrate site. Residue aspartate 298 participates in Fe cation binding.

It belongs to the KAE1 / TsaD family. Fe(2+) is required as a cofactor.

It is found in the cytoplasm. The enzyme catalyses L-threonylcarbamoyladenylate + adenosine(37) in tRNA = N(6)-L-threonylcarbamoyladenosine(37) in tRNA + AMP + H(+). Required for the formation of a threonylcarbamoyl group on adenosine at position 37 (t(6)A37) in tRNAs that read codons beginning with adenine. Is involved in the transfer of the threonylcarbamoyl moiety of threonylcarbamoyl-AMP (TC-AMP) to the N6 group of A37, together with TsaE and TsaB. TsaD likely plays a direct catalytic role in this reaction. The sequence is that of tRNA N6-adenosine threonylcarbamoyltransferase from Borrelia garinii subsp. bavariensis (strain ATCC BAA-2496 / DSM 23469 / PBi) (Borreliella bavariensis).